We begin with the raw amino-acid sequence, 597 residues long: Elongation factor 4 (597 aa).

A tr-type G domain is found at 2–184 (DHIRNFSIIA…SLIAKVPPPK (183 aa)). GTP is bound by residues 14-19 (DHGKST) and 131-134 (NKID).

The protein belongs to the TRAFAC class translation factor GTPase superfamily. Classic translation factor GTPase family. LepA subfamily.

The protein resides in the cell inner membrane. The catalysed reaction is GTP + H2O = GDP + phosphate + H(+). Its function is as follows. Required for accurate and efficient protein synthesis under certain stress conditions. May act as a fidelity factor of the translation reaction, by catalyzing a one-codon backward translocation of tRNAs on improperly translocated ribosomes. Back-translocation proceeds from a post-translocation (POST) complex to a pre-translocation (PRE) complex, thus giving elongation factor G a second chance to translocate the tRNAs correctly. Binds to ribosomes in a GTP-dependent manner. The chain is Elongation factor 4 from Burkholderia lata (strain ATCC 17760 / DSM 23089 / LMG 22485 / NCIMB 9086 / R18194 / 383).